We begin with the raw amino-acid sequence, 213 residues long: MADTSGPQSSHISSSAGEKGSGCAVQDLLYWRDVKQSGMVFGGTMVLLLSLAAFSIISVISYLVLSLLAVTISYRVYKSVLQAVQKTDEGHPFKPLLEKDIALSSDAFQKALSTSLAHVNHALKYIVRLFLVEDLVDSLKLALLMWLMTYVGAVFNGITLLILGVLLAFTAPIVYEKYKVQIDHYVSLVHSHVKSITEKIQAKLPGALKKKSE.

The segment covering 1–16 (MADTSGPQSSHISSSA) has biased composition (polar residues). Residues 1 to 20 (MADTSGPQSSHISSSAGEKG) form a disordered region. A Reticulon domain is found at 25–213 (VQDLLYWRDV…LPGALKKKSE (189 aa)). A run of 2 helical transmembrane segments spans residues 45 to 65 (MVLL…YLVL) and 154 to 174 (VFNG…APIV).

In terms of assembly, homodimer.

The protein resides in the endoplasmic reticulum membrane. It localises to the golgi apparatus membrane. Functionally, may be involved in membrane trafficking in the early secretory pathway. This is Reticulon-3 (rtn3) from Xenopus tropicalis (Western clawed frog).